The sequence spans 201 residues: ATP-dependent Clp protease proteolytic subunit (201 aa).

Serine 98 serves as the catalytic Nucleophile. Histidine 123 is an active-site residue.

The protein belongs to the peptidase S14 family. As to quaternary structure, fourteen ClpP subunits assemble into 2 heptameric rings which stack back to back to give a disk-like structure with a central cavity, resembling the structure of eukaryotic proteasomes.

It is found in the cytoplasm. The enzyme catalyses Hydrolysis of proteins to small peptides in the presence of ATP and magnesium. alpha-casein is the usual test substrate. In the absence of ATP, only oligopeptides shorter than five residues are hydrolyzed (such as succinyl-Leu-Tyr-|-NHMec, and Leu-Tyr-Leu-|-Tyr-Trp, in which cleavage of the -Tyr-|-Leu- and -Tyr-|-Trp bonds also occurs).. Its function is as follows. Cleaves peptides in various proteins in a process that requires ATP hydrolysis. Has a chymotrypsin-like activity. Plays a major role in the degradation of misfolded proteins. The protein is ATP-dependent Clp protease proteolytic subunit of Rickettsia canadensis (strain McKiel).